A 117-amino-acid polypeptide reads, in one-letter code: Large ribosomal subunit protein uL18 (117 aa).

This sequence belongs to the universal ribosomal protein uL18 family. As to quaternary structure, part of the 50S ribosomal subunit; part of the 5S rRNA/L5/L18/L25 subcomplex. Contacts the 5S and 23S rRNAs.

This is one of the proteins that bind and probably mediate the attachment of the 5S RNA into the large ribosomal subunit, where it forms part of the central protuberance. The protein is Large ribosomal subunit protein uL18 of Neisseria gonorrhoeae (strain ATCC 700825 / FA 1090).